The primary structure comprises 98 residues: MAAETLTELEAAIETVVSTFFTFAGREGRKGSLNINEFKELATQQLPHLLKDVGSLDEKMKTLDVNQDSELRFSEYWRLIGELAKEVRKEKALGIRKK.

One can recognise an EF-hand domain in the interval 18–53 (STFFTFAGREGRKGSLNINEFKELATQQLPHLLKDV). Positions 32, 37, 64, 66, 68, 70, and 75 each coordinate Ca(2+). Phosphoserine is present on Ser32.

The protein belongs to the S-100 family. Homodimer. Part of a copper-dependent multiprotein complex containing S100A13, FGF1 and SYT1. Interacts with FGF1 and SYT1. Interacts with IL1A.

It is found in the cytoplasm. The protein localises to the secreted. Plays a role in the export of proteins that lack a signal peptide and are secreted by an alternative pathway. Binds two calcium ions per subunit. Binds one copper ion. Binding of one copper ion does not interfere with calcium binding. Required for the copper-dependent stress-induced export of IL1A and FGF1. The calcium-free protein binds to lipid vesicles containing phosphatidylserine, but not to vesicles containing phosphatidylcholine. The polypeptide is Protein S100-A13 (S100a13) (Mus musculus (Mouse)).